The chain runs to 49 residues: Large ribosomal subunit protein bL33B (49 aa).

The protein belongs to the bacterial ribosomal protein bL33 family.

The sequence is that of Large ribosomal subunit protein bL33B from Listeria welshimeri serovar 6b (strain ATCC 35897 / DSM 20650 / CCUG 15529 / CIP 8149 / NCTC 11857 / SLCC 5334 / V8).